The primary structure comprises 145 residues: MYPAHLLVLLAVCVSLLGASAIPPLPLNLVQFTYLIQCANKGSRPSYHYADYGCYCGAGGSGTPVDELDRCCKVHDDCYGEAEKMGCYPKLTMYNYYCGTEGPYCNTKTDCQRYVCACDLQAAKCFARSPYNNKNYNIDTSKRCK.

A signal peptide spans 1–21 (MYPAHLLVLLAVCVSLLGASA). The propeptide occupies 22 to 27 (IPPLPL). Disulfide bonds link C38–C98, C54–C144, C56–C72, C71–C125, C78–C118, C87–C111, and C105–C116. Y55, G57, and G59 together coordinate Ca(2+). The active site involves H75. Ca(2+) is bound at residue D76. D119 is a catalytic residue.

Belongs to the phospholipase A2 family. Group I subfamily. D49 sub-subfamily. The cofactor is Ca(2+). In terms of tissue distribution, expressed by the venom gland.

The protein resides in the secreted. It carries out the reaction a 1,2-diacyl-sn-glycero-3-phosphocholine + H2O = a 1-acyl-sn-glycero-3-phosphocholine + a fatty acid + H(+). Its function is as follows. PLA2 catalyzes the calcium-dependent hydrolysis of the 2-acyl groups in 3-sn-phosphoglycerides. The polypeptide is Basic phospholipase A2 cPm08 (Laticauda semifasciata (Black-banded sea krait)).